The primary structure comprises 69 residues: Nodulin-3 (69 aa).

A signal peptide spans 1 to 24 (MAKILKFVFAIILFFSLFLLSMEA).

This chain is Nodulin-3 (ENOD3), found in Pisum sativum (Garden pea).